We begin with the raw amino-acid sequence, 474 residues long: Melanopsin (474 aa).

The Extracellular segment spans residues 1-72 (MNSPSESRVP…VDVPDHAHYT (72 aa)). N-linked (GlcNAc...) asparagine glycans are attached at residues Asn-31 and Asn-35. The helical transmembrane segment at 73–93 (LGTVILLVGLTGMLGNLTVIY) threads the bilayer. Residues 94 to 107 (TFCRNRGLRTPANM) are Cytoplasmic-facing. A helical transmembrane segment spans residues 108-128 (LIINLAVSDFLMSFTQAPVFF). At 129-144 (ASSLYKKWLFGETGCK) the chain is on the extracellular side. Cys-143 and Cys-221 are oxidised to a cystine. Residues 145–165 (FYAFCGAVFGIVSMITLTAIA) form a helical membrane-spanning segment. Residues 166–188 (MDRYLVITRPLATIGMRSKRRTA) are Cytoplasmic-facing. Residues 189–209 (LVLLGVWLYALAWSLPPFFGW) form a helical membrane-spanning segment. Topologically, residues 210-238 (SAYVPEGLLTSCSWDYVTFTPLVRAYTML) are extracellular. Residues 239-259 (LFCFVFFLPLLIIIFCYIFIF) form a helical membrane-spanning segment. The Cytoplasmic segment spans residues 260-293 (RAIRETGRACEGCGESPLRRRQWQRLQSEWKMAK). A helical membrane pass occupies residues 294-314 (VALIVILLFVLSWAPYSTVAL). The Extracellular portion of the chain corresponds to 315–355 (VGFAGYSHILTPYMSSVPAVIAKASAIHNPIIYAITHPKYR). Lys-337 carries the post-translational modification N6-(retinylidene)lysine. The chain crosses the membrane as a helical span at residues 356–372 (AAIAQHLPCLGVLLGVS). Residues 373–474 (GQRSHPSLSY…RHLPSLDRRM (102 aa)) are Cytoplasmic-facing. A disordered region spans residues 428–474 (AAQQASGQSFCSHDLEDGEVKAPSSPQEQKSKTPKTKRHLPSLDRRM).

Belongs to the G-protein coupled receptor 1 family. Opsin subfamily. Eye; expressed in a photosensitive subset of retinal ganglion cells (at protein level).

It is found in the cell membrane. Its subcellular location is the cell projection. It localises to the axon. The protein resides in the dendrite. The protein localises to the perikaryon. In terms of biological role, photoreceptor that binds cis-retinaldehydes. Contributes to pupillar reflex, photoentrainment and other non-image forming responses to light. May be involved in the optokinetic visual tracking response. May be involved in the regulation of retinal hyaloid vessel growth and regression. The sequence is that of Melanopsin from Rattus norvegicus (Rat).